We begin with the raw amino-acid sequence, 120 residues long: Large ribosomal subunit protein uL22 (120 aa).

It belongs to the universal ribosomal protein uL22 family. In terms of assembly, part of the 50S ribosomal subunit.

Functionally, this protein binds specifically to 23S rRNA; its binding is stimulated by other ribosomal proteins, e.g. L4, L17, and L20. It is important during the early stages of 50S assembly. It makes multiple contacts with different domains of the 23S rRNA in the assembled 50S subunit and ribosome. In terms of biological role, the globular domain of the protein is located near the polypeptide exit tunnel on the outside of the subunit, while an extended beta-hairpin is found that lines the wall of the exit tunnel in the center of the 70S ribosome. The chain is Large ribosomal subunit protein uL22 from Corynebacterium diphtheriae (strain ATCC 700971 / NCTC 13129 / Biotype gravis).